The sequence spans 211 residues: ATP phosphoribosyltransferase (211 aa).

The protein belongs to the ATP phosphoribosyltransferase family. Short subfamily. In terms of assembly, heteromultimer composed of HisG and HisZ subunits.

The protein resides in the cytoplasm. It catalyses the reaction 1-(5-phospho-beta-D-ribosyl)-ATP + diphosphate = 5-phospho-alpha-D-ribose 1-diphosphate + ATP. It participates in amino-acid biosynthesis; L-histidine biosynthesis; L-histidine from 5-phospho-alpha-D-ribose 1-diphosphate: step 1/9. Its function is as follows. Catalyzes the condensation of ATP and 5-phosphoribose 1-diphosphate to form N'-(5'-phosphoribosyl)-ATP (PR-ATP). Has a crucial role in the pathway because the rate of histidine biosynthesis seems to be controlled primarily by regulation of HisG enzymatic activity. The protein is ATP phosphoribosyltransferase of Bacillus cereus (strain B4264).